The chain runs to 664 residues: Intraflagellar transport protein 70B (664 aa).

TPR repeat units lie at residues 11-44 (DGEF…SPRS), 45-78 (RAGL…HPEL), 153-186 (YDGQ…SGYQ), 188-220 (DISY…GIRQ), 385-418 (LTEQ…YDET), 423-456 (IPVL…CNDH), and 458-491 (VWKL…NYDN). Positions 507–534 (YIMTSQNEEAEELMRKIEKEEEQLSYDD) form a coiled coil. One copy of the TPR 8 repeat lies at 543–576 (CIVNLVIGTLYCAKGNYDFGISRVIKSLEPYHKK).

The protein belongs to the TTC30/dfy-1/fleer family. In terms of assembly, interacts with the IFT B complex components IFT27, IFT46, IFT74, IFT52, IFT57, IFT80, IFT81 and IFT88. Interacts with KIF17.

Its subcellular location is the cell projection. It localises to the cilium. In terms of biological role, required for polyglutamylation of axonemal tubulin. Plays a role in anterograde intraflagellar transport (IFT), the process by which cilia precursors are transported from the base of the cilium to the site of their incorporation at the tip. In Rattus norvegicus (Rat), this protein is Intraflagellar transport protein 70B (Ift70b).